Here is a 262-residue protein sequence, read N- to C-terminus: Biotin carboxyl carrier protein of acetyl-CoA carboxylase, chloroplastic (262 aa).

Residues 1-47 (MASSLAPATKAATNLRLTHSLRFSPKPNNLRFATKPGNTLLCTRVKA) constitute a chloroplast transit peptide. Disordered stretches follow at residues 53 to 84 (ALDSSSNATSPPMKAKSKEEPPAKPLAEPSSS) and 125 to 185 (IRKK…KSSL). Pro residues predominate over residues 132–160 (PQPPPAPQPSVVYSPPPPALPPPPVPAST). Positions 161–185 (PAPTLARATPTPTSAPAVKSAKSSL) are enriched in low complexity. In terms of domain architecture, Biotinyl-binding spans 185 to 261 (LPPLKSPMAG…SVDTPLFVIQ (77 aa)). Lysine 227 carries the post-translational modification N6-biotinyllysine.

The protein resides in the plastid. Its subcellular location is the chloroplast. The protein operates within lipid metabolism; fatty acid biosynthesis. Its function is as follows. This protein is a component of the acetyl coenzyme A carboxylase complex; first, biotin carboxylase catalyzes the carboxylation of the carrier protein and then the transcarboxylase transfers the carboxyl group to form malonyl-CoA. The protein is Biotin carboxyl carrier protein of acetyl-CoA carboxylase, chloroplastic (ACCB-1) of Glycine max (Soybean).